The chain runs to 1820 residues: Histone-lysine N-methyltransferase, H3 lysine-9 specific (1820 aa).

Disordered regions lie at residues 1–54 (MPGA…TSMR), 74–251 (NLLP…TPVT), 284–618 (SLSD…APTK), 634–681 (SSER…KKAV), 804–836 (NVDDQDSAQPQNQTPLPSAISVSSKKNHGSLSK), 850–893 (SSTL…VNSW), 911–944 (HAKKKWKERERGKEREKEKVREKEKAEEENEQLR), 966–996 (DVESRTRSIPRADGETRKRPPSPGISVSTDA), 1063–1126 (PLSV…NGAV), 1183–1270 (RYAV…DRTA), 1296–1335 (KASAVSPVPSANRPSPAPSAKADLLPQKRKRRLKKITSQQ), and 1385–1407 (RSEPRTKREPIEEDNNEYFTDSD). Positions 11-31 (VDNPLVLDSSDSDDNLSGLPL) are enriched in low complexity. Over residues 109 to 129 (ADSSSPPENQNVISFLGNHSQ) the composition is skewed to polar residues. Residues 152 to 169 (GGENIAGQNNEANAAQAA) show a composition bias toward low complexity. 2 stretches are compositionally biased toward polar residues: residues 174–204 (GTPSLTLSSNRPQSVSGAQLVVASSSRSAIN) and 212–222 (SIPQQSPSSRA). 3 stretches are compositionally biased toward low complexity: residues 226–236 (RSASIASSRSR), 284–311 (SLSDPTILSPPSATSAPPNSPIPSTSTT), and 339–352 (TPATTSPAGPGPSA). Over residues 361-370 (KSSDQKESPR) the composition is skewed to basic and acidic residues. Residues 374 to 385 (SKQPSSPSSTHG) are compositionally biased toward polar residues. Positions 400–424 (SATSGKSSAASSRSKSRAPLSSRAA) are enriched in low complexity. Polar residues predominate over residues 433 to 442 (SKTTSVSSTH). A compositionally biased stretch (low complexity) spans 443–459 (PPSRASPSSLPSQSQRQ). The span at 479 to 510 (TLSSGTGQSTPSKFSLPTSDVASNQKNKSTGL) shows a compositional bias: polar residues. 3 stretches are compositionally biased toward low complexity: residues 514–531 (PKKPSSTPTSSIPQRTST), 551–563 (QSSSEASRSIQTS), and 594–618 (TKATTLFHTTSSPPSPSQSTSAPTK). Polar residues-rich tracts occupy residues 643 to 662 (GKSQTSDSVVAPAASQTAAS) and 810 to 827 (SAQPQNQTPLPSAISVSS). Residues 850–861 (SSTLGDSVSGLG) are compositionally biased toward low complexity. Residues 869–893 (TQSMPQSPLPTTNTNNSSGIEVNSW) show a composition bias toward polar residues. Basic and acidic residues-rich tracts occupy residues 917-944 (KERERGKEREKEKVREKEKAEEENEQLR) and 966-983 (DVESRTRSIPRADGETRK). The span at 1076–1089 (SSSSTSTPSLLSRS) shows a compositional bias: low complexity. Low complexity predominate over residues 1296–1320 (KASAVSPVPSANRPSPAPSAKADLL). Residues 1516 to 1585 (LGCDCDGPCD…ECMNRVIQRG (70 aa)) form the Pre-SET domain. Residues C1518, C1520, C1524, C1531, C1533, C1567, C1571, C1573, and C1577 each coordinate Zn(2+). The 161-residue stretch at 1590–1750 (TGIEIFKTKE…KHEELCISYK (161 aa)) folds into the SET domain. Residues 1600–1602 (KGW), Y1643, R1704, and 1707–1708 (NH) contribute to the S-adenosyl-L-methionine site. Zn(2+) is bound at residue C1710. A disordered region spans residues 1756 to 1794 (DDIPSPEPVKKKKGGKGKKQMSKTSASAHPPEMTALNSD). Positions 1765-1776 (KKKKGGKGKKQM) are enriched in basic residues. A Post-SET domain is found at 1800–1816 (VKDICRCGAKNCDGRMF). 3 residues coordinate Zn(2+): C1804, C1806, and C1811.

This sequence belongs to the class V-like SAM-binding methyltransferase superfamily. Histone-lysine methyltransferase family. Suvar3-9 subfamily.

The protein resides in the nucleus. It localises to the chromosome. It catalyses the reaction N(6)-methyl-L-lysyl(9)-[histone H3] + S-adenosyl-L-methionine = N(6),N(6)-dimethyl-L-lysyl(9)-[histone H3] + S-adenosyl-L-homocysteine + H(+). The enzyme catalyses L-lysyl(9)-[histone H3] + S-adenosyl-L-methionine = N(6)-methyl-L-lysyl(9)-[histone H3] + S-adenosyl-L-homocysteine + H(+). In terms of biological role, histone methyltransferase that specifically dimethylates histone H3 to form H3K9me2. H3K9me2 represents a specific tag for epigenetic transcriptional repression by recruiting HP1 proteins to methylated histones. Mainly functions in heterochromatin regions, thereby playing a central role in the establishment of constitutive heterochromatin at centromeric regions. This chain is Histone-lysine N-methyltransferase, H3 lysine-9 specific, found in Cryptococcus neoformans var. grubii serotype A (strain H99 / ATCC 208821 / CBS 10515 / FGSC 9487) (Filobasidiella neoformans var. grubii).